A 384-amino-acid chain; its full sequence is 23S rRNA (uracil(747)-C(5))-methyltransferase RlmC (384 aa).

4 residues coordinate [4Fe-4S] cluster: Cys7, Cys15, Cys18, and Cys94. Residues Gln219, Phe248, Glu269, and Asn316 each contribute to the S-adenosyl-L-methionine site. Cys343 functions as the Nucleophile in the catalytic mechanism.

This sequence belongs to the class I-like SAM-binding methyltransferase superfamily. RNA M5U methyltransferase family. RlmC subfamily.

The catalysed reaction is uridine(747) in 23S rRNA + S-adenosyl-L-methionine = 5-methyluridine(747) in 23S rRNA + S-adenosyl-L-homocysteine + H(+). Catalyzes the formation of 5-methyl-uridine at position 747 (m5U747) in 23S rRNA. The polypeptide is 23S rRNA (uracil(747)-C(5))-methyltransferase RlmC (Shewanella sp. (strain MR-7)).